Consider the following 229-residue polypeptide: Glutathione S-transferase 1 (229 aa).

Residues 2–86 (AQFTLWSHAH…YLADKYDTER (85 aa)) enclose the GST N-terminal domain. The 137-residue stretch at 93 to 229 (DHPEYYKVIQ…FEERSKALDN (137 aa)) folds into the GST C-terminal domain.

This sequence belongs to the GST superfamily.

The enzyme catalyses RX + glutathione = an S-substituted glutathione + a halide anion + H(+). Functionally, involved in the oxidative stress response and detoxification. The chain is Glutathione S-transferase 1 (gst1) from Schizosaccharomyces pombe (strain 972 / ATCC 24843) (Fission yeast).